The sequence spans 263 residues: Proteasome subunit alpha (263 aa).

A disordered region spans residues 229–263 (AALLQDTPPDDADADADAGKKPANDGNLPPNDDKS).

Belongs to the peptidase T1A family. As to quaternary structure, the 20S proteasome core is composed of 14 alpha and 14 beta subunits that assemble into four stacked heptameric rings, resulting in a barrel-shaped structure. The two inner rings, each composed of seven catalytic beta subunits, are sandwiched by two outer rings, each composed of seven alpha subunits. The catalytic chamber with the active sites is on the inside of the barrel. Has a gated structure, the ends of the cylinder being occluded by the N-termini of the alpha-subunits. Is capped by the proteasome-associated ATPase, ARC.

It localises to the cytoplasm. It functions in the pathway protein degradation; proteasomal Pup-dependent pathway. The formation of the proteasomal ATPase ARC-20S proteasome complex, likely via the docking of the C-termini of ARC into the intersubunit pockets in the alpha-rings, may trigger opening of the gate for substrate entry. Interconversion between the open-gate and close-gate conformations leads to a dynamic regulation of the 20S proteasome proteolysis activity. Functionally, component of the proteasome core, a large protease complex with broad specificity involved in protein degradation. This chain is Proteasome subunit alpha, found in Actinosynnema mirum (strain ATCC 29888 / DSM 43827 / JCM 3225 / NBRC 14064 / NCIMB 13271 / NRRL B-12336 / IMRU 3971 / 101).